Reading from the N-terminus, the 983-residue chain is Protein translocase subunit SecA (983 aa).

ATP contacts are provided by residues Q83, 101–105, and D489; that span reads GEGKT. Residues 948–983 form a disordered region; it reads ISSEEENNNEKTNININEDLERTKGEAQQTAKNPNE. Over residues 973 to 983 the composition is skewed to polar residues; it reads EAQQTAKNPNE.

The protein belongs to the SecA family. Monomer and homodimer. Part of the essential Sec protein translocation apparatus which comprises SecA, SecYEG and auxiliary proteins SecDF. Other proteins may also be involved.

Its subcellular location is the cell membrane. It is found in the cytoplasm. The enzyme catalyses ATP + H2O + cellular proteinSide 1 = ADP + phosphate + cellular proteinSide 2.. Functionally, part of the Sec protein translocase complex. Interacts with the SecYEG preprotein conducting channel. Has a central role in coupling the hydrolysis of ATP to the transfer of proteins into and across the cell membrane, serving as an ATP-driven molecular motor driving the stepwise translocation of polypeptide chains across the membrane. In Mesomycoplasma hyopneumoniae (strain 7448) (Mycoplasma hyopneumoniae), this protein is Protein translocase subunit SecA.